Here is a 242-residue protein sequence, read N- to C-terminus: MSAAPREDGRADDELRPITITRHWLDHAAGSVLVEFGRTRVLCAASAAEGVPRWRKGSGLGWVTAEYAMLPASTNTRSDRESVKGRIGGRTHEISRLIGRSLRAIIDYKALGENTIQLDCDVLQADGGTRTAAITGAYVALADAVEHLRSTGALTGEPLTGSVAAVSVGIIDGVPRLDLPYVEDVRAETDMNVVMTGSGKFVEVQGTAEGAAFDRAELDALLALAEKGCADLTRLQQEALSR.

Residues Arg-90 and 128–130 each bind phosphate; that span reads GTR.

It belongs to the RNase PH family. Homohexameric ring arranged as a trimer of dimers.

It carries out the reaction tRNA(n+1) + phosphate = tRNA(n) + a ribonucleoside 5'-diphosphate. Its function is as follows. Phosphorolytic 3'-5' exoribonuclease that plays an important role in tRNA 3'-end maturation. Removes nucleotide residues following the 3'-CCA terminus of tRNAs; can also add nucleotides to the ends of RNA molecules by using nucleoside diphosphates as substrates, but this may not be physiologically important. Probably plays a role in initiation of 16S rRNA degradation (leading to ribosome degradation) during starvation. The protein is Ribonuclease PH of Nocardioides sp. (strain ATCC BAA-499 / JS614).